Here is a 124-residue protein sequence, read N- to C-terminus: Holo-[acyl-carrier-protein] synthase (124 aa).

Positions 7 and 55 each coordinate Mg(2+).

The protein belongs to the P-Pant transferase superfamily. AcpS family. Mg(2+) is required as a cofactor.

The protein localises to the cytoplasm. It carries out the reaction apo-[ACP] + CoA = holo-[ACP] + adenosine 3',5'-bisphosphate + H(+). Transfers the 4'-phosphopantetheine moiety from coenzyme A to a Ser of acyl-carrier-protein. In Borreliella afzelii (strain PKo) (Borrelia afzelii), this protein is Holo-[acyl-carrier-protein] synthase.